The chain runs to 348 residues: Bombesin receptor-activated protein C6orf89 homolog (348 aa).

The Cytoplasmic segment spans residues 1 to 58; sequence MDLAANEISIYDKLSETVDLVRQTGHQCGMSEKAIEKFIRQLLEKNEPQRGPPQYPLL. Residues 59 to 79 form a helical membrane-spanning segment; it reads IAMYKVLLTLGLILFTAYFVI. Residues 80–348 lie on the Extracellular side of the membrane; that stretch reads QPFSSLAPEP…ICDGTTLSEL (269 aa).

In terms of assembly, homodimer. Interacts with BRS3. Interacts (via N-terminus) with SIN3B. Post-translationally, glycosylated.

It is found in the golgi apparatus membrane. Its subcellular location is the cytoplasm. In terms of biological role, exhibits histone deacetylase (HDAC) enhancer properties. May play a role in cell cycle progression and wound repair of bronchial epithelial cells. The protein is Bombesin receptor-activated protein C6orf89 homolog of Rattus norvegicus (Rat).